A 293-amino-acid chain; its full sequence is MEKSTWTTKVGLAQMLKGGVIMDVVTPEQARIAEEAGAVAVMALERVPADIRAQGGVARMSDPELILAIKQAVTIPVMAKARIGHFVEAQVLEAIGVDYIDESEVLTPADEEHHINKHKFRVPFVCGCRNLGEALRRIAEGAAMLRTKGEAGTGNVVEAVRHARAVYSEIRRLQSMNEDELFTYAKQIQAPYELVKQVATEGKLPVVNFAAGGIATPADAALLMQLGVDGIFVGSGIFKSGNPIKRARAIVEATTHYNDPEIIAEVSKGLGEAMVGINIDQIPAEQLMARRGW.

D23 contacts D-ribose 5-phosphate. The active-site Schiff-base intermediate with D-ribose 5-phosphate is K80. A D-ribose 5-phosphate-binding site is contributed by G152. D-glyceraldehyde 3-phosphate is bound at residue R164. D-ribose 5-phosphate is bound by residues G213 and 234–235 (GS).

It belongs to the PdxS/SNZ family. In terms of assembly, in the presence of PdxT, forms a dodecamer of heterodimers.

It carries out the reaction aldehydo-D-ribose 5-phosphate + D-glyceraldehyde 3-phosphate + L-glutamine = pyridoxal 5'-phosphate + L-glutamate + phosphate + 3 H2O + H(+). It participates in cofactor biosynthesis; pyridoxal 5'-phosphate biosynthesis. Its function is as follows. Catalyzes the formation of pyridoxal 5'-phosphate from ribose 5-phosphate (RBP), glyceraldehyde 3-phosphate (G3P) and ammonia. The ammonia is provided by the PdxT subunit. Can also use ribulose 5-phosphate and dihydroxyacetone phosphate as substrates, resulting from enzyme-catalyzed isomerization of RBP and G3P, respectively. The chain is Pyridoxal 5'-phosphate synthase subunit PdxS from Chloroflexus aggregans (strain MD-66 / DSM 9485).